Consider the following 401-residue polypeptide: S-adenosylmethionine synthase (401 aa).

135 to 140 (GHGSGD) contacts ATP.

Belongs to the AdoMet synthase 2 family. The cofactor is Mg(2+).

The enzyme catalyses L-methionine + ATP + H2O = S-adenosyl-L-methionine + phosphate + diphosphate. It functions in the pathway amino-acid biosynthesis; S-adenosyl-L-methionine biosynthesis; S-adenosyl-L-methionine from L-methionine: step 1/1. Functionally, catalyzes the formation of S-adenosylmethionine from methionine and ATP. The polypeptide is S-adenosylmethionine synthase (Methanobrevibacter smithii (strain ATCC 35061 / DSM 861 / OCM 144 / PS)).